The chain runs to 570 residues: 5-aminolevulinate synthase, mitochondrial (570 aa).

The transit peptide at 1-53 directs the protein to the mitochondrion; sequence MESVIRSSAKICPFMHSATGSMQSVKALKNANLPAIAQQCPFMGKAMEQRRGY. The substrate site is built by R119, S232, and K251. Pyridoxal 5'-phosphate-binding residues include S284, H312, and T356. The active site involves K359. K359 carries the post-translational modification N6-(pyridoxal phosphate)lysine. Residues T388 and T389 each coordinate pyridoxal 5'-phosphate. T474 contacts substrate.

It belongs to the class-II pyridoxal-phosphate-dependent aminotransferase family. As to quaternary structure, homodimer. Pyridoxal 5'-phosphate is required as a cofactor.

It is found in the mitochondrion matrix. The enzyme catalyses succinyl-CoA + glycine + H(+) = 5-aminolevulinate + CO2 + CoA. It participates in porphyrin-containing compound metabolism; protoporphyrin-IX biosynthesis; 5-aminolevulinate from glycine: step 1/1. Its function is as follows. Catalyzes the synthesis of 5-aminolevulinate (ALA) from succinyl-CoA and glycine, the first and rate-limiting step in heme biosynthesis. This is 5-aminolevulinate synthase, mitochondrial (HEM1) from Kluyveromyces lactis (strain ATCC 8585 / CBS 2359 / DSM 70799 / NBRC 1267 / NRRL Y-1140 / WM37) (Yeast).